Reading from the N-terminus, the 269-residue chain is Protein OPG079 (269 aa).

Belongs to the orthopoxvirus OPG079 family. Homoomultimer (Potential). Interacts with the small subunit of ribonucleotide reductase. Interacts with host FAM111A; this interaction protomtes OPG079 degradation through autophagy.

The protein localises to the host cytoplasm. Its function is as follows. Plays an essential role in viral DNA replication. Binds to ssDNA with high affinity and localizes to cytoplasmic factories where nascent viral genomes accumulate. May disrupt loops, hairpins and other secondary structures present on ssDNA to reduce and eliminate pausing of viral DNA polymerase at specific sites during elongation. This chain is Protein OPG079 (OPG079), found in Variola virus (isolate Human/India/Ind3/1967) (VARV).